A 144-amino-acid chain; its full sequence is Bacilliredoxin SSP1311 (144 aa).

It belongs to the bacilliredoxin family.

The sequence is that of Bacilliredoxin SSP1311 from Staphylococcus saprophyticus subsp. saprophyticus (strain ATCC 15305 / DSM 20229 / NCIMB 8711 / NCTC 7292 / S-41).